Reading from the N-terminus, the 462-residue chain is Putative zinc metalloprotease RSc1411 (462 aa).

A helical transmembrane segment spans residues 1-21 (MLTVLAFVFAIAVLIVVHELG). Position 18 (His-18) interacts with Zn(2+). Residue Glu-19 is part of the active site. Residue His-22 participates in Zn(2+) binding. Residues 102-124 (FAIVAAGPVFNFLLAIALYALLA) form a helical membrane-spanning segment. The PDZ domain maps to 201–283 (TVRLRELPSA…MPEQNASIDI (83 aa)). A run of 2 helical transmembrane segments spans residues 386 to 406 (FVAF…LPVP) and 430 to 450 (WQAV…SLAL).

The protein belongs to the peptidase M50B family. It depends on Zn(2+) as a cofactor.

It is found in the cell inner membrane. The chain is Putative zinc metalloprotease RSc1411 from Ralstonia nicotianae (strain ATCC BAA-1114 / GMI1000) (Ralstonia solanacearum).